The following is a 236-amino-acid chain: Small ribosomal subunit protein uS2c (236 aa).

Belongs to the universal ribosomal protein uS2 family.

It is found in the plastid. The protein localises to the chloroplast. The polypeptide is Small ribosomal subunit protein uS2c (rps2) (Agrostis stolonifera (Creeping bentgrass)).